The chain runs to 404 residues: MNPHHSHHHSSYGGGGYPGQAYRQQQPPSNPYQYNQPSPQPYQGSQPPQNGYNGGYPAASQGPMYGGRPGIADVYHNSYNQGNHSAPAPPPSDPVSFGQGAPQGYNFQYSRCTGKRKALLIGINYFNQKGQLRGCINDVKNMSTYLNQNFGYAREDMVVLTDDQQNPMSQPTKANILRAMHWLVKDAQPNDSLFFHYSGHGGQTPDLDGDEDDGYDEVIYPVDFRAAGHIVDDEMHRIMVKPLQPGVRLTAIFDSCHSGSALDLPYIYSTQGILKEPNLAKEAGQGLLGVVSAYARGDMSSMMSTAVGFFKKATKGDEAYERTIQTKTSPADVVMWSGSKDDQTSQDAQIAGQATGAMSWAFISALRKNPQQSYVQLLNSIRDELSAKYTQKPQLSCSHPLVAL.

Positions Met1 to Ser10 are enriched in basic residues. Residues Met1–Gly100 form a disordered region. Low complexity predominate over residues Gln24–Gly51. Catalysis depends on residues His200 and Cys256.

Belongs to the peptidase C14B family.

Involved in cell death (apoptosis). This is Metacaspase-1A (casA) from Aspergillus niger (strain ATCC MYA-4892 / CBS 513.88 / FGSC A1513).